The chain runs to 294 residues: 4-hydroxy-tetrahydrodipicolinate synthase (294 aa).

Thr-45 contacts pyruvate. Tyr-133 functions as the Proton donor/acceptor in the catalytic mechanism. Lys-161 serves as the catalytic Schiff-base intermediate with substrate. A pyruvate-binding site is contributed by Ile-203.

This sequence belongs to the DapA family. As to quaternary structure, homotetramer; dimer of dimers.

Its subcellular location is the cytoplasm. It catalyses the reaction L-aspartate 4-semialdehyde + pyruvate = (2S,4S)-4-hydroxy-2,3,4,5-tetrahydrodipicolinate + H2O + H(+). Its pathway is amino-acid biosynthesis; L-lysine biosynthesis via DAP pathway; (S)-tetrahydrodipicolinate from L-aspartate: step 3/4. Catalyzes the condensation of (S)-aspartate-beta-semialdehyde [(S)-ASA] and pyruvate to 4-hydroxy-tetrahydrodipicolinate (HTPA). This Shewanella sp. (strain ANA-3) protein is 4-hydroxy-tetrahydrodipicolinate synthase.